Consider the following 551-residue polypeptide: Protein PNS1 (551 aa).

The disordered stretch occupies residues 1–72 (MSAQEFYQGG…TGGQPVYQDT (72 aa)). Residues 1–94 (MSAQEFYQGG…RMNPRKRVND (94 aa)) lie on the Cytoplasmic side of the membrane. Residues 8-19 (QGGNQRGYQQQQ) are compositionally biased toward low complexity. The segment covering 45-63 (PPNYNMKPSQPYASTNPET) has biased composition (polar residues). Residues 95 to 115 (IIPLILFIAAVVGFAVVSGIA) form a helical membrane-spanning segment. The Extracellular portion of the chain corresponds to 116-147 (IHGFVQVNGLGGGMGDSSIGRTGSSITLDYHT). A helical transmembrane segment spans residues 148–168 (VYLLLVVVALGLVIASLYLAA). Residues 169–177 (LRAFTKIIL) lie on the Cytoplasmic side of the membrane. Residues 178–198 (EVTLALTVILNIGICIYYFII) form a helical membrane-spanning segment. At 199-200 (QY) the chain is on the extracellular side. A helical membrane pass occupies residues 201-221 (WSGAIIFLIIALVSVFFYWGM). Residues 222 to 244 (RKRIPLAKLLLQTTIDVTKHHPS) are Cytoplasmic-facing. A helical transmembrane segment spans residues 245–265 (VYVVVFIGLIIQAAVSVWYTF). The Extracellular segment spans residues 266–307 (TCIAIYVKWTPGSAACSDGGCSSSKVAGLVFYATFSYLWLSQ). The helical transmembrane segment at 308-328 (VIGNVILCTLAGGVFGGWYYY) threads the bilayer. Topologically, residues 329 to 356 (GPRTPGGGVPKRASLLAFVRASTLSLGS) are cytoplasmic. Residues 357 to 377 (IAFGSLLVTILELLRLILQLF) traverse the membrane as a helical segment. At 378 to 386 (RQYEAGQGD) the chain is on the extracellular side. Residues 387-407 (MIGSILICIAQCCIGCIQWMV) traverse the membrane as a helical segment. Topologically, residues 408-452 (EYFNKYAYIEIALYGKSYIPAAKDTWRLLKDRGIDALVNDSLVGT) are cytoplasmic. The chain crosses the membrane as a helical span at residues 453–473 (ALMWGAYINGFLCAVLGYFYL). At 474–488 (RFTHPAYNSDGQYSA) the chain is on the extracellular side. A helical transmembrane segment spans residues 489-509 (PVILFSFLIGLNESFTVGSAI). The Cytoplasmic portion of the chain corresponds to 510 to 551 (DAGVSTIFVGLGEDPMVLAERSPGLFEMIRQVYPRVVQGVPH).

The protein belongs to the CTL (choline transporter-like) family.

It is found in the cell membrane. Its function is as follows. Probably involved in transport through the plasma membrane. In Cryptococcus neoformans var. neoformans serotype D (strain B-3501A) (Filobasidiella neoformans), this protein is Protein PNS1 (PNS1).